The chain runs to 315 residues: Ribosomal RNA small subunit methyltransferase H (315 aa).

S-adenosyl-L-methionine contacts are provided by residues 37–39 (GGH), Asp57, Phe83, Asp105, and Gln112.

Belongs to the methyltransferase superfamily. RsmH family.

The protein localises to the cytoplasm. The catalysed reaction is cytidine(1402) in 16S rRNA + S-adenosyl-L-methionine = N(4)-methylcytidine(1402) in 16S rRNA + S-adenosyl-L-homocysteine + H(+). Functionally, specifically methylates the N4 position of cytidine in position 1402 (C1402) of 16S rRNA. This Pseudomonas putida (strain ATCC 47054 / DSM 6125 / CFBP 8728 / NCIMB 11950 / KT2440) protein is Ribosomal RNA small subunit methyltransferase H.